Here is a 426-residue protein sequence, read N- to C-terminus: UPF0329 protein ECU06_0040 (426 aa).

The segment covering 136 to 172 (RQRKREEETERSVKELVGDEEKAKSKEEKAKSKEEKA) has biased composition (basic and acidic residues). Residues 136 to 230 (RQRKREEETE…GGKKKSKGGR (95 aa)) are disordered. Residues 220–230 (KGGKKKSKGGR) are compositionally biased toward basic residues.

The protein belongs to the UPF0329 family.

This chain is UPF0329 protein ECU06_0040, found in Encephalitozoon cuniculi (strain GB-M1) (Microsporidian parasite).